Reading from the N-terminus, the 185-residue chain is Crossover junction endodeoxyribonuclease RuvC (185 aa).

Catalysis depends on residues aspartate 7, glutamate 66, and aspartate 137. The Mg(2+) site is built by aspartate 7, glutamate 66, and aspartate 137.

This sequence belongs to the RuvC family. Homodimer which binds Holliday junction (HJ) DNA. The HJ becomes 2-fold symmetrical on binding to RuvC with unstacked arms; it has a different conformation from HJ DNA in complex with RuvA. In the full resolvosome a probable DNA-RuvA(4)-RuvB(12)-RuvC(2) complex forms which resolves the HJ. Mg(2+) is required as a cofactor.

It localises to the cytoplasm. The enzyme catalyses Endonucleolytic cleavage at a junction such as a reciprocal single-stranded crossover between two homologous DNA duplexes (Holliday junction).. Its function is as follows. The RuvA-RuvB-RuvC complex processes Holliday junction (HJ) DNA during genetic recombination and DNA repair. Endonuclease that resolves HJ intermediates. Cleaves cruciform DNA by making single-stranded nicks across the HJ at symmetrical positions within the homologous arms, yielding a 5'-phosphate and a 3'-hydroxyl group; requires a central core of homology in the junction. The consensus cleavage sequence is 5'-(A/T)TT(C/G)-3'. Cleavage occurs on the 3'-side of the TT dinucleotide at the point of strand exchange. HJ branch migration catalyzed by RuvA-RuvB allows RuvC to scan DNA until it finds its consensus sequence, where it cleaves and resolves the cruciform DNA. The polypeptide is Crossover junction endodeoxyribonuclease RuvC (Anaeromyxobacter dehalogenans (strain 2CP-1 / ATCC BAA-258)).